The primary structure comprises 89 residues: Tuberculin-active protein (89 aa).

An intrachain disulfide couples C27 to C59. Residues 61-89 (DGGSESEGKNGSQMRLIADVGPESATVAK) are disordered.

Functionally, tuberculin is the soluble, proteinaceous cell substance of the bacterium, to which infected animals become hypersensitive and react characteristically to dermal injections. The polypeptide is Tuberculin-active protein (Mycobacterium tuberculosis).